Consider the following 340-residue polypeptide: Lysophospholipase L2 (340 aa).

It is found in the cell inner membrane. It carries out the reaction a 1-acyl-sn-glycero-3-phosphocholine + H2O = sn-glycerol 3-phosphocholine + a fatty acid + H(+). The protein is Lysophospholipase L2 (pldB) of Escherichia coli O6:H1 (strain CFT073 / ATCC 700928 / UPEC).